We begin with the raw amino-acid sequence, 98 residues long: C-X-C motif chemokine 10 (98 aa).

The N-terminal stretch at 1–21 (MNQTAILICCLVFLTLSGIQG) is a signal peptide. Residue R26 is modified to Citrulline. 2 disulfides stabilise this stretch: C30-C57 and C32-C74.

Belongs to the intercrine alpha (chemokine CxC) family.

The protein resides in the secreted. Chemotactic for monocytes and T-lymphocytes. Binds to CXCR3. In Macaca nemestrina (Pig-tailed macaque), this protein is C-X-C motif chemokine 10 (CXCL10).